Consider the following 276-residue polypeptide: Omega-amidase NIT2-B (276 aa).

The 245-residue stretch at 4 to 248 (FRLSLVQFLV…ETVISADIDL (245 aa)) folds into the CN hydrolase domain. The active-site Proton acceptor is the Glu43. Lys112 acts as the Proton donor in catalysis. The active-site Nucleophile is Cys153.

Belongs to the carbon-nitrogen hydrolase superfamily. NIT1/NIT2 family. Homodimer.

The protein localises to the cytoplasm. It catalyses the reaction 2-oxoglutaramate + H2O = 2-oxoglutarate + NH4(+). It carries out the reaction 2-oxosuccinamate + H2O = oxaloacetate + NH4(+). In terms of biological role, has omega-amidase activity. The role of omega-amidase is to remove potentially toxic intermediates by converting 2-oxoglutaramate and 2-oxosuccinamate to biologically useful 2-oxoglutarate and oxaloacetate, respectively. In Xenopus laevis (African clawed frog), this protein is Omega-amidase NIT2-B (nit2b).